Here is a 137-residue protein sequence, read N- to C-terminus: Small ribosomal subunit protein bS16 (137 aa).

It belongs to the bacterial ribosomal protein bS16 family.

In Leuconostoc citreum (strain KM20), this protein is Small ribosomal subunit protein bS16.